Reading from the N-terminus, the 320-residue chain is Ferrochelatase (320 aa).

Fe cation is bound by residues histidine 194 and glutamate 275.

Belongs to the ferrochelatase family.

Its subcellular location is the cytoplasm. It carries out the reaction heme b + 2 H(+) = protoporphyrin IX + Fe(2+). Its pathway is porphyrin-containing compound metabolism; protoheme biosynthesis; protoheme from protoporphyrin-IX: step 1/1. Catalyzes the ferrous insertion into protoporphyrin IX. The sequence is that of Ferrochelatase from Vibrio parahaemolyticus serotype O3:K6 (strain RIMD 2210633).